We begin with the raw amino-acid sequence, 141 residues long: Auxin-responsive protein SAUR62 (141 aa).

Belongs to the ARG7 family. Expressed in stamen filaments and petals.

Its subcellular location is the cell membrane. May promote auxin-stimulated organ elongation, such as hypocotyls, stamen filaments and petals. The sequence is that of Auxin-responsive protein SAUR62 from Arabidopsis thaliana (Mouse-ear cress).